The following is a 336-amino-acid chain: MRTSVVDVGSNTVRLMVADAEGGVPLPVHTAKWRLRLSEQVRPGDPVPEEAVERLVGAVADASRTADRWGASGPLAFATAVVRAAPNRREVLRTVQARTGVPLCTLPGEVEAELTFLAARRWMGWRSGPLALLDIGGGSLEVAFGRGRLPGFVASLPLGAARLTHEFLAGGRDPASPEQVKALRRRVRHQLRDAAARIRWEGPRTAVATSRTFQQLGRLCGAPPGRYGPFTERRMRCSDLGDAVGRLAALSAAERARLPGISAPRAAQSLAGAVVGHTAMKLTGLEAVALCPWAIREGVLLRHIEDGPAWWAEVVRRSDEAAPPAPVPLRLASASN.

This sequence belongs to the GppA/Ppx family.

This is an uncharacterized protein from Streptomyces coelicolor (strain ATCC BAA-471 / A3(2) / M145).